The following is a 323-amino-acid chain: Aldo-keto reductase family 1 member C4 (323 aa).

Residues 20–24 and Asp-50 contribute to the NADP(+) site; that span reads GFGTY. The active-site Proton donor is the Tyr-55. His-117 provides a ligand contact to substrate. Residues 166 to 167, Gln-190, 216 to 221, and 270 to 280 contribute to the NADP(+) site; these read SN, HSALGT, and KSYNEQRIREN.

It belongs to the aldo/keto reductase family. Monomer.

It is found in the cytoplasm. The protein resides in the cytosol. It carries out the reaction chlordecone alcohol + NADP(+) = chlordecone + NADPH + H(+). The enzyme catalyses a 3alpha-hydroxysteroid + NADP(+) = a 3-oxosteroid + NADPH + H(+). The catalysed reaction is a 3alpha-hydroxysteroid + NAD(+) = a 3-oxosteroid + NADH + H(+). It catalyses the reaction 5alpha-androstane-3alpha,17beta-diol + NADP(+) = 17beta-hydroxy-5alpha-androstan-3-one + NADPH + H(+). It carries out the reaction 5alpha-androstane-3beta,17beta-diol + NADP(+) = 17beta-hydroxy-5alpha-androstan-3-one + NADPH + H(+). The enzyme catalyses 5alpha-androstane-3alpha,17beta-diol + NAD(+) = 17beta-hydroxy-5alpha-androstan-3-one + NADH + H(+). The catalysed reaction is 17beta-estradiol + NADP(+) = estrone + NADPH + H(+). It catalyses the reaction 17beta-estradiol + NAD(+) = estrone + NADH + H(+). It carries out the reaction (20S)-hydroxypregn-4-en-3-one + NADP(+) = progesterone + NADPH + H(+). The enzyme catalyses (20S)-hydroxypregn-4-en-3-one + NAD(+) = progesterone + NADH + H(+). The catalysed reaction is androsterone + NADP(+) = 5alpha-androstan-3,17-dione + NADPH + H(+). It catalyses the reaction testosterone + NADP(+) = androst-4-ene-3,17-dione + NADPH + H(+). It carries out the reaction testosterone + NAD(+) = androst-4-ene-3,17-dione + NADH + H(+). The enzyme catalyses 3alpha-hydroxy-5alpha-androstane 17-O-(beta-D-glucuronate) + NADP(+) = 5alpha-dihydrotestosterone 17-O-(beta-D-glucuronate) + NADPH + H(+). The catalysed reaction is (3beta,5alpha,17beta)-3-hydroxy-androstan-17-yl sulfate + NADP(+) = 5alpha-dihydrotestosterone sulfate + NADPH + H(+). It catalyses the reaction 5alpha-androstane-3alpha,17beta-diol + NAD(+) = androsterone + NADH + H(+). It functions in the pathway steroid metabolism. Cytosolic aldo-keto reductase that catalyzes the NADH and NADPH-dependent reduction of ketosteroids to hydroxysteroids. Liver specific enzyme that acts as an NAD(P)(H)-dependent 3-, 17- and 20-ketosteroid reductase on the steroid nucleus and side chain. Displays the ability to catalyze both oxidation and reduction in vitro, but most probably acts as a reductase in vivo since the oxidase activity measured in vitro is inhibited by physiological concentration of NADPH. Acts preferentially as a 3-alpha-hydroxysteroid dehydrogenase (HSD) with a subsidiary 3-beta-HSD activity. Catalyzes efficiently the transformation of the potent androgen 5-alpha-dihydrotestosterone (5alpha-DHT or 17beta-hydroxy-5alpha-androstan-3-one) into the less active form, 5-alpha-androstan-3-alpha,17-beta-diol (3-alpha-diol). Catalyzes the reduction of estrone into 17beta-estradiol but with low efficiency. Metabolizes a broad spectrum of natural and synthetic therapeutic steroid and plays an important role in metabolism of androgens, estrogens, progestereone and conjugated steroids. Catalyzes the biotransformation of the pesticide chlordecone (kepone) to its corresponding alcohol leading to increased biliary excretion of the pesticide and concomitant reduction of its neurotoxicity since bile is the major excretory route. This chain is Aldo-keto reductase family 1 member C4 (AKR1C4), found in Macaca fascicularis (Crab-eating macaque).